A 556-amino-acid chain; its full sequence is Glutamine--tRNA ligase (556 aa).

The 'HIGH' region motif lies at 34 to 44 (PEPNGYLHIGH). Residues 35-37 (EPN) and 41-47 (HIGHAKS) each bind ATP. L-glutamine contacts are provided by D67 and Y212. ATP-binding positions include T231, 261–262 (RL), and 269–271 (MSK). A 'KMSKS' region motif is present at residues 268–272 (VMSKR).

The protein belongs to the class-I aminoacyl-tRNA synthetase family. Monomer.

The protein resides in the cytoplasm. The enzyme catalyses tRNA(Gln) + L-glutamine + ATP = L-glutaminyl-tRNA(Gln) + AMP + diphosphate. This is Glutamine--tRNA ligase from Vibrio cholerae serotype O1 (strain ATCC 39315 / El Tor Inaba N16961).